Here is a 65-residue protein sequence, read N- to C-terminus: Metallothionein (65 aa).

Belongs to the metallothionein superfamily. Type 4 family.

In terms of biological role, metallothioneins have a high content of cysteine residues that bind various heavy metals. The polypeptide is Metallothionein (Paracentrotus lividus (Common sea urchin)).